The following is a 360-amino-acid chain: Phospho-N-acetylmuramoyl-pentapeptide-transferase (360 aa).

The next 10 helical transmembrane spans lie at 21–41 (YITF…LWIG), 73–93 (TMGG…WADL), 98–118 (VWFV…DDYW), 132–152 (WKYF…YAVG), 168–188 (FMPQ…VGTS), 199–219 (GLAI…AWAT), 236–256 (AGEL…FLWY), 263–283 (VFMG…IAVL), 288–308 (LLLV…ILQV), and 338–358 (VIVC…VTLK).

This sequence belongs to the glycosyltransferase 4 family. MraY subfamily. Mg(2+) serves as cofactor.

Its subcellular location is the cell inner membrane. It carries out the reaction UDP-N-acetyl-alpha-D-muramoyl-L-alanyl-gamma-D-glutamyl-meso-2,6-diaminopimeloyl-D-alanyl-D-alanine + di-trans,octa-cis-undecaprenyl phosphate = di-trans,octa-cis-undecaprenyl diphospho-N-acetyl-alpha-D-muramoyl-L-alanyl-D-glutamyl-meso-2,6-diaminopimeloyl-D-alanyl-D-alanine + UMP. Its pathway is cell wall biogenesis; peptidoglycan biosynthesis. Catalyzes the initial step of the lipid cycle reactions in the biosynthesis of the cell wall peptidoglycan: transfers peptidoglycan precursor phospho-MurNAc-pentapeptide from UDP-MurNAc-pentapeptide onto the lipid carrier undecaprenyl phosphate, yielding undecaprenyl-pyrophosphoryl-MurNAc-pentapeptide, known as lipid I. In Actinobacillus pleuropneumoniae serotype 7 (strain AP76), this protein is Phospho-N-acetylmuramoyl-pentapeptide-transferase.